The primary structure comprises 366 residues: 3-beta-hydroxysteroid dehydrogenase (366 aa).

The active-site Proton donor is the Y154.

This sequence belongs to the 3-beta-HSD family.

It carries out the reaction testosterone + NAD(+) = androst-4-ene-3,17-dione + NADH + H(+). The catalysed reaction is testosterone + NADP(+) = androst-4-ene-3,17-dione + NADPH + H(+). In terms of biological role, catalyzes the degradation of testosterone into androstenedione. This Mycolicibacterium neoaurum (Mycobacterium neoaurum) protein is 3-beta-hydroxysteroid dehydrogenase.